Reading from the N-terminus, the 108-residue chain is UPF0145 protein Patl_2194 (108 aa).

It belongs to the UPF0145 family.

This Pseudoalteromonas atlantica (strain T6c / ATCC BAA-1087) protein is UPF0145 protein Patl_2194.